A 261-amino-acid chain; its full sequence is Cytochrome c oxidase subunit 3 (261 aa).

The Mitochondrial matrix portion of the chain corresponds to 1–15; the sequence is MTHQTHAYHMVNPSP. A helical transmembrane segment spans residues 16 to 34; sequence WPLTGALSALLMTSGLIMW. The Mitochondrial intermembrane portion of the chain corresponds to 35 to 40; sequence FHFNST. Residues 41–66 form a helical membrane-spanning segment; sequence ALLTLGLTTNMLTMYQWWRDVIREST. At 67 to 72 the chain is on the mitochondrial matrix side; that stretch reads FQGHHT. Residues 73–105 form a helical membrane-spanning segment; sequence PAVQKGLRYGMILFIISEVLFFTGFFWAFYHSS. Residues 106-128 are Mitochondrial intermembrane-facing; sequence LAPTPELGGCWPPTGIHPLNPLE. The helical transmembrane segment at 129–152 threads the bilayer; sequence VPLLNTSVLLASGVSITWAHHSLM. At 153 to 155 the chain is on the mitochondrial matrix side; it reads EGN. A helical transmembrane segment spans residues 156 to 183; it reads RYHMLQALFITIALGVYFTLLQASEYYE. The Mitochondrial intermembrane segment spans residues 184-190; that stretch reads APFTISD. The helical transmembrane segment at 191-223 threads the bilayer; the sequence is GVYGSTFFVATGFHGLHVIIGSTFLIVCFFRQL. Residues 224 to 232 lie on the Mitochondrial matrix side of the membrane; it reads KFHFTSSHH. The chain crosses the membrane as a helical span at residues 233 to 256; that stretch reads FGFEAAAWYWHFVDVVWLFLYMSI. Residues 257–261 are Mitochondrial intermembrane-facing; it reads YWWGS.

This sequence belongs to the cytochrome c oxidase subunit 3 family. In terms of assembly, component of the cytochrome c oxidase (complex IV, CIV), a multisubunit enzyme composed of 14 subunits. The complex is composed of a catalytic core of 3 subunits MT-CO1, MT-CO2 and MT-CO3, encoded in the mitochondrial DNA, and 11 supernumerary subunits COX4I, COX5A, COX5B, COX6A, COX6B, COX6C, COX7A, COX7B, COX7C, COX8 and NDUFA4, which are encoded in the nuclear genome. The complex exists as a monomer or a dimer and forms supercomplexes (SCs) in the inner mitochondrial membrane with NADH-ubiquinone oxidoreductase (complex I, CI) and ubiquinol-cytochrome c oxidoreductase (cytochrome b-c1 complex, complex III, CIII), resulting in different assemblies (supercomplex SCI(1)III(2)IV(1) and megacomplex MCI(2)III(2)IV(2)).

The protein localises to the mitochondrion inner membrane. The enzyme catalyses 4 Fe(II)-[cytochrome c] + O2 + 8 H(+)(in) = 4 Fe(III)-[cytochrome c] + 2 H2O + 4 H(+)(out). Its function is as follows. Component of the cytochrome c oxidase, the last enzyme in the mitochondrial electron transport chain which drives oxidative phosphorylation. The respiratory chain contains 3 multisubunit complexes succinate dehydrogenase (complex II, CII), ubiquinol-cytochrome c oxidoreductase (cytochrome b-c1 complex, complex III, CIII) and cytochrome c oxidase (complex IV, CIV), that cooperate to transfer electrons derived from NADH and succinate to molecular oxygen, creating an electrochemical gradient over the inner membrane that drives transmembrane transport and the ATP synthase. Cytochrome c oxidase is the component of the respiratory chain that catalyzes the reduction of oxygen to water. Electrons originating from reduced cytochrome c in the intermembrane space (IMS) are transferred via the dinuclear copper A center (CU(A)) of subunit 2 and heme A of subunit 1 to the active site in subunit 1, a binuclear center (BNC) formed by heme A3 and copper B (CU(B)). The BNC reduces molecular oxygen to 2 water molecules using 4 electrons from cytochrome c in the IMS and 4 protons from the mitochondrial matrix. The polypeptide is Cytochrome c oxidase subunit 3 (MT-CO3) (Ovis aries (Sheep)).